The sequence spans 354 residues: NADH-quinone oxidoreductase subunit H (354 aa).

Helical transmembrane passes span 25–45 (LVRI…LILW), 91–111 (WVYL…WAVI), 126–146 (LLYA…AGWA), 170–190 (MGFA…SDIV), 205–225 (FLSW…VSGI), 257–277 (LFFL…SILF), 290–310 (FIPG…VFIW), and 330–350 (VFLP…MSPL).

It belongs to the complex I subunit 1 family. In terms of assembly, NDH-1 is composed of 14 different subunits. Subunits NuoA, H, J, K, L, M, N constitute the membrane sector of the complex.

It localises to the cell inner membrane. The catalysed reaction is a quinone + NADH + 5 H(+)(in) = a quinol + NAD(+) + 4 H(+)(out). Its function is as follows. NDH-1 shuttles electrons from NADH, via FMN and iron-sulfur (Fe-S) centers, to quinones in the respiratory chain. The immediate electron acceptor for the enzyme in this species is believed to be ubiquinone. Couples the redox reaction to proton translocation (for every two electrons transferred, four hydrogen ions are translocated across the cytoplasmic membrane), and thus conserves the redox energy in a proton gradient. This subunit may bind ubiquinone. In Paraburkholderia phymatum (strain DSM 17167 / CIP 108236 / LMG 21445 / STM815) (Burkholderia phymatum), this protein is NADH-quinone oxidoreductase subunit H.